A 1937-amino-acid chain; its full sequence is Collagen-like protein 7 (1937 aa).

Residues N6 and N21 are each glycosylated (N-linked (GlcNAc...) asparagine; by host). Disordered regions lie at residues 88–248 (CKGN…KGDK), 294–531 (NLKG…PDLG), 583–643 (LKGD…NQGV), and 670–1144 (IKGD…DTAT). 5 consecutive Collagen-like domains span residues 102–161 (GPKG…KGEK), 168–227 (GEKG…KGDI), 297–356 (GEKG…KGEK), 363–422 (GDKG…IGEK), and 453–512 (GDKG…KGDK). Over residues 296 to 514 (KGEKGDKGNK…DKGDKGDKGD (219 aa)) the composition is skewed to basic and acidic residues. Residue N515 is glycosylated (N-linked (GlcNAc...) asparagine; by host). 3 stretches are compositionally biased toward basic and acidic residues: residues 584–605 (KGDKGDKGINGNKGDKGEKGDK), 614–625 (KGEKGDKGDKGD), and 670–899 (IKGD…KGDK). 5 consecutive Collagen-like domains span residues 672 to 731 (GDKG…KGDK), 735 to 854 (GNKG…KGNI), 867 to 926 (GLKG…KGDK), 936 to 995 (GIKG…KGDK), and 1023 to 1142 (GSKG…KGDT). N902 is a glycosylation site (N-linked (GlcNAc...) asparagine; by host). The span at 907–1141 (YKGDKGDKGS…DKGDKGDKGD (235 aa)) shows a compositional bias: basic and acidic residues. N1178, N1192, N1212, N1217, N1245, N1246, N1255, N1317, N1422, N1427, N1432, N1443, N1452, N1477, N1494, N1506, N1513, N1533, N1598, N1619, N1620, N1632, N1641, N1663, N1664, N1672, N1682, N1683, N1732, N1735, N1746, N1756, N1784, N1842, and N1934 each carry an N-linked (GlcNAc...) asparagine; by host glycan.

May be hydroxylated on lysine by the viral-encoded procollagen-lysine,2-oxoglutarate 5-dioxygenase.

It localises to the virion. In terms of biological role, may participate in the formation of a layer of cross-linked glycosylated fibrils at the viral surface thus giving it a hairy-like appearance. This Acanthamoeba polyphaga mimivirus (APMV) protein is Collagen-like protein 7.